Reading from the N-terminus, the 201-residue chain is Proteasome subunit beta 1 (201 aa).

Position 1 (Met1) is a propeptide, removed in mature form; by autocatalysis. The Nucleophile role is filled by Thr2.

This sequence belongs to the peptidase T1B family. In terms of assembly, the 20S proteasome core is composed of 14 alpha and 14 beta subunits that assemble into four stacked heptameric rings, resulting in a barrel-shaped structure. The two inner rings, each composed of seven catalytic beta subunits, are sandwiched by two outer rings, each composed of seven alpha subunits. The catalytic chamber with the active sites is on the inside of the barrel. Has a gated structure, the ends of the cylinder being occluded by the N-termini of the alpha-subunits. Is capped at one or both ends by the proteasome regulatory ATPase, PAN.

It is found in the cytoplasm. The catalysed reaction is Cleavage of peptide bonds with very broad specificity.. With respect to regulation, the formation of the proteasomal ATPase PAN-20S proteasome complex, via the docking of the C-termini of PAN into the intersubunit pockets in the alpha-rings, triggers opening of the gate for substrate entry. Interconversion between the open-gate and close-gate conformations leads to a dynamic regulation of the 20S proteasome proteolysis activity. Component of the proteasome core, a large protease complex with broad specificity involved in protein degradation. This chain is Proteasome subunit beta 1, found in Pyrobaculum neutrophilum (strain DSM 2338 / JCM 9278 / NBRC 100436 / V24Sta) (Thermoproteus neutrophilus).